Consider the following 503-residue polypeptide: Cytochrome P450 11B1, mitochondrial (503 aa).

Residues 1–24 constitute a mitochondrion transit peptide; that stretch reads MALRAKAEVCMAAPWLSLQRARAL. A heme-binding site is contributed by Cys-450.

The protein belongs to the cytochrome P450 family. Heme serves as cofactor.

Its subcellular location is the mitochondrion inner membrane. The catalysed reaction is a steroid + 2 reduced [adrenodoxin] + O2 + 2 H(+) = an 11beta-hydroxysteroid + 2 oxidized [adrenodoxin] + H2O. It catalyses the reaction 11-deoxycortisol + 2 reduced [adrenodoxin] + O2 + 2 H(+) = cortisol + 2 oxidized [adrenodoxin] + H2O. It carries out the reaction 21-hydroxyprogesterone + 2 reduced [adrenodoxin] + O2 + 2 H(+) = corticosterone + 2 oxidized [adrenodoxin] + H2O. The enzyme catalyses 21-hydroxyprogesterone + 2 reduced [adrenodoxin] + O2 + 2 H(+) = 18-hydroxy-11-deoxycorticosterone + 2 oxidized [adrenodoxin] + H2O. The catalysed reaction is 21-hydroxyprogesterone + 2 reduced [adrenodoxin] + O2 + 2 H(+) = 19-hydroxy-11-deoxycorticosterone + 2 oxidized [adrenodoxin] + H2O. It catalyses the reaction cortisol + 2 reduced [adrenodoxin] + O2 + 2 H(+) = 18-hydroxycortisol + 2 oxidized [adrenodoxin] + H2O. It carries out the reaction 11-deoxycortisol + 2 reduced [adrenodoxin] + O2 + 2 H(+) = 18-hydroxy-11-deoxycortisol + 2 oxidized [adrenodoxin] + H2O. It functions in the pathway steroid biosynthesis; glucocorticoid biosynthesis. It participates in steroid hormone biosynthesis. A cytochrome P450 monooxygenase involved in the biosynthesis of adrenal corticoids. Catalyzes a variety of reactions that are essential for many species, including detoxification, defense, and the formation of endogenous chemicals like steroid hormones. Steroid 11beta, 18- and 19-hydroxylase with preferred regioselectivity at 11beta, then 18, and lastly 19. Catalyzes the hydroxylation of 11-deoxycortisol and 11-deoxycorticosterone (21-hydroxyprogesterone) at 11beta position, yielding cortisol or corticosterone, respectively, but cannot produce aldosterone. Mechanistically, uses molecular oxygen inserting one oxygen atom into a substrate for hydroxylation and reducing the second into a water molecule. Two electrons are provided by NADPH via a two-protein mitochondrial transfer system comprising flavoprotein FDXR (adrenodoxin/ferredoxin reductase) and nonheme iron-sulfur protein FDX1 or FDX2 (adrenodoxin/ferredoxin). Due to its lack of 18-oxidation activity, it is incapable of generating aldosterone. Could also be involved in the androgen metabolic pathway. The polypeptide is Cytochrome P450 11B1, mitochondrial (CYP11B1) (Papio hamadryas ursinus (Chacma baboon)).